The chain runs to 440 residues: MNKFRTFPQINTLIQDESLKSYPFYIKAFFCKKVVAKLKENFSRDEISKDKLLLEIKKEIKTFYRKDLQSVINASGVVIHTNLGRSVIHEELYEACKDIICNYSNVEFDLENGKRGSRYALVLEKLKMLFECEDALVVNNNAAAVFLVLNSLCYDKEVISSRGELVEIGGSFRVPEVIKAAGVKLCEVGTSNKTHLKDYEQAINENTALILKTHKSNFALMGFHSEVNIKDLHELVKEKGLLSYYDLGSGWCENLNEKLIKNEPKIKKLVQECDILSFSGDKLFGSVQAGIILGKKELIGKLKQNQLLRMLRVDKLTLSFLNESLKAYLQKDYEKIITLKLLNDDLSFIEEKALRVQKELKFQTQLKKSKSLVGGGSMPDKSLDTYILTFQGDALKLQTRFRKENIIGRIENDEFVLDFRTIRENELQKLILKINQMENL.

An N6-(pyridoxal phosphate)lysine modification is found at lysine 282.

This sequence belongs to the SelA family. Pyridoxal 5'-phosphate serves as cofactor.

Its subcellular location is the cytoplasm. It carries out the reaction L-seryl-tRNA(Sec) + selenophosphate + H(+) = L-selenocysteinyl-tRNA(Sec) + phosphate. The protein operates within aminoacyl-tRNA biosynthesis; selenocysteinyl-tRNA(Sec) biosynthesis; selenocysteinyl-tRNA(Sec) from L-seryl-tRNA(Sec) (bacterial route): step 1/1. Converts seryl-tRNA(Sec) to selenocysteinyl-tRNA(Sec) required for selenoprotein biosynthesis. The protein is L-seryl-tRNA(Sec) selenium transferase of Campylobacter jejuni subsp. doylei (strain ATCC BAA-1458 / RM4099 / 269.97).